We begin with the raw amino-acid sequence, 986 residues long: Resact receptor (986 aa).

The first 21 residues, 1–21, serve as a signal peptide directing secretion; the sequence is MATTRLLFLLVVAVMITMVRS. Topologically, residues 22–507 are extracellular; the sequence is ATLHYNPTVI…GELCTNWGLY (486 aa). N-linked (GlcNAc...) asparagine glycans are attached at residues Asn185, Asn361, and Asn410. The chain crosses the membrane as a helical span at residues 508–528; sequence LGTLIPAFIIIFGGGLGYYIY. Topologically, residues 529–986 are cytoplasmic; sequence RKRAYEAALD…SHSCSALHSS (458 aa). The Protein kinase domain occupies 568–836; it reads LSAISVISNA…PNIIEVRTML (269 aa).

Its subcellular location is the membrane. The enzyme catalyses GTP = 3',5'-cyclic GMP + diphosphate. Its function is as follows. Implicated as a cell-surface receptor on spermatozoa for 'resact' a chemotactic peptide, and on various other cells as a receptor for atrial natriuretic peptide. The chain is Resact receptor from Arbacia punctulata (Punctuate sea urchin).